The following is a 287-amino-acid chain: Intermediate filament family orphan 2 (287 aa).

Residues 1 to 254 form the IF rod domain; sequence MNLQTMVDTL…RLIKGSADRN (254 aa). The interval 248–287 is disordered; that stretch reads KGSADRNSPSPSSVASSDSGSTDEIQDDLEREADVEPMVS. Positions 255–267 are enriched in low complexity; sequence SPSPSSVASSDSG. Over residues 271-287 the composition is skewed to acidic residues; that stretch reads EIQDDLEREADVEPMVS.

The protein belongs to the intermediate filament family.

The sequence is that of Intermediate filament family orphan 2 (Iffo2) from Rattus norvegicus (Rat).